Reading from the N-terminus, the 528-residue chain is U3 small nucleolar RNA-associated protein 15 homolog (528 aa).

N-acetylalanine is present on Ala-2. WD repeat units follow at residues 36-75 (KEFG…PVKT), 78-117 (RFKD…PLRQ), 120-159 (GHTK…EILT), 162-202 (EHSD…NVLC), 204-242 (EHGQ…QLLV), 246-285 (NHHK…VVHS), and 287-326 (DYAA…KKES). Lys-249 is covalently cross-linked (Glycyl lysine isopeptide (Lys-Gly) (interchain with G-Cter in SUMO2)). The interval 508 to 528 (AELPEEKTESPRQPSDTDKNS) is disordered. Basic and acidic residues predominate over residues 511–528 (PEEKTESPRQPSDTDKNS).

In terms of assembly, part of the small subunit (SSU) processome, composed of more than 70 proteins and the RNA chaperone small nucleolar RNA (snoRNA) U3. May be a component of the proposed t-UTP subcomplex of the ribosomal small subunit (SSU) processome containing at least UTP4, WDR43, HEATR1, UTP15, WDR75. Interacts directly with UTP4 and WDR43.

Its subcellular location is the nucleus. The protein localises to the nucleolus. In terms of biological role, ribosome biogenesis factor. Involved in nucleolar processing of pre-18S ribosomal RNA. Required for optimal pre-ribosomal RNA transcription by RNA polymerase I. Part of the small subunit (SSU) processome, first precursor of the small eukaryotic ribosomal subunit. During the assembly of the SSU processome in the nucleolus, many ribosome biogenesis factors, an RNA chaperone and ribosomal proteins associate with the nascent pre-rRNA and work in concert to generate RNA folding, modifications, rearrangements and cleavage as well as targeted degradation of pre-ribosomal RNA by the RNA exosome. The polypeptide is U3 small nucleolar RNA-associated protein 15 homolog (Rattus norvegicus (Rat)).